We begin with the raw amino-acid sequence, 557 residues long: Kelch repeat and BTB domain-containing protein 2 (557 aa).

Residues 26 to 95 (CDVIITIGDG…LYNRHISSMN (70 aa)) form the BTB domain. One can recognise a BACK domain in the interval 133–223 (HKLYEMVHIP…CIDIQNLDKK (91 aa)). 3 Kelch repeats span residues 305 to 352 (EIII…VIDD), 353 to 399 (TIYA…VLDQ), and 401 to 464 (IYII…SHKD).

Interacts (via BTB domain) with host CUL3.

The protein localises to the host cytoplasm. Its function is as follows. Probable substrate-specific adapter of CUL3-containing E3 ubiquitin-protein ligases which mediate the ubiquitination and subsequent proteasomal degradation of host target proteins. The protein is Kelch repeat and BTB domain-containing protein 2 (KBTB2) of Bos taurus (Bovine).